The chain runs to 429 residues: Glutamyl-tRNA reductase (429 aa).

Residues 56-59 (TCNR), S119, 124-126 (EPQ), and Q130 contribute to the substrate site. C57 acts as the Nucleophile in catalysis. 199-204 (GAGEMI) lines the NADP(+) pocket.

The protein belongs to the glutamyl-tRNA reductase family. Homodimer.

The catalysed reaction is (S)-4-amino-5-oxopentanoate + tRNA(Glu) + NADP(+) = L-glutamyl-tRNA(Glu) + NADPH + H(+). The protein operates within porphyrin-containing compound metabolism; protoporphyrin-IX biosynthesis; 5-aminolevulinate from L-glutamyl-tRNA(Glu): step 1/2. Its function is as follows. Catalyzes the NADPH-dependent reduction of glutamyl-tRNA(Glu) to glutamate 1-semialdehyde (GSA). The sequence is that of Glutamyl-tRNA reductase from Herminiimonas arsenicoxydans.